The following is a 106-amino-acid chain: Pyrimidine/purine nucleoside phosphorylase (106 aa).

This sequence belongs to the nucleoside phosphorylase PpnP family.

The catalysed reaction is a purine D-ribonucleoside + phosphate = a purine nucleobase + alpha-D-ribose 1-phosphate. It catalyses the reaction adenosine + phosphate = alpha-D-ribose 1-phosphate + adenine. The enzyme catalyses cytidine + phosphate = cytosine + alpha-D-ribose 1-phosphate. It carries out the reaction guanosine + phosphate = alpha-D-ribose 1-phosphate + guanine. The catalysed reaction is inosine + phosphate = alpha-D-ribose 1-phosphate + hypoxanthine. It catalyses the reaction thymidine + phosphate = 2-deoxy-alpha-D-ribose 1-phosphate + thymine. The enzyme catalyses uridine + phosphate = alpha-D-ribose 1-phosphate + uracil. It carries out the reaction xanthosine + phosphate = alpha-D-ribose 1-phosphate + xanthine. In terms of biological role, catalyzes the phosphorolysis of diverse nucleosides, yielding D-ribose 1-phosphate and the respective free bases. Can use uridine, adenosine, guanosine, cytidine, thymidine, inosine and xanthosine as substrates. Also catalyzes the reverse reactions. This is Pyrimidine/purine nucleoside phosphorylase from Burkholderia multivorans (strain ATCC 17616 / 249).